Here is a 139-residue protein sequence, read N- to C-terminus: UPF0225 protein Bpro_4182 (139 aa).

The protein belongs to the UPF0225 family.

In Polaromonas sp. (strain JS666 / ATCC BAA-500), this protein is UPF0225 protein Bpro_4182.